The sequence spans 299 residues: MFMGSIVALITPMDLKGTVDRISLKKLVDHHVVSGTSAIVSVGTTGEMSGLTHEEHVDVVMRTLEFSDGRLPVIAGTGANSTAEAVALTNKFNDSDIAACLSVTPYYNRPNQEGLFQHFKAISESTDLPQILYNVPIRTGCDMLPITVSRLAKIKNIVGIKEATGNLNRVNQLKQLVHEDFILLSGDDLSALDFMKLGGVGVISVTANIAAKEMAELCKLANENDFSTAQHINQRLMPVHQALFIDSNPIPVKWACKELGLISHYVLRLPMTVLSEVHRDVLKQALIDSGLFYNQSNYK.

Position 45 (Thr45) interacts with pyruvate. Tyr133 acts as the Proton donor/acceptor in catalysis. The active-site Schiff-base intermediate with substrate is the Lys161. Pyruvate is bound at residue Ile203.

It belongs to the DapA family. In terms of assembly, homotetramer; dimer of dimers.

It is found in the cytoplasm. The catalysed reaction is L-aspartate 4-semialdehyde + pyruvate = (2S,4S)-4-hydroxy-2,3,4,5-tetrahydrodipicolinate + H2O + H(+). The protein operates within amino-acid biosynthesis; L-lysine biosynthesis via DAP pathway; (S)-tetrahydrodipicolinate from L-aspartate: step 3/4. In terms of biological role, catalyzes the condensation of (S)-aspartate-beta-semialdehyde [(S)-ASA] and pyruvate to 4-hydroxy-tetrahydrodipicolinate (HTPA). The protein is 4-hydroxy-tetrahydrodipicolinate synthase of Blochmanniella pennsylvanica (strain BPEN).